The chain runs to 516 residues: uncharacterized protein (516 aa).

The signal sequence occupies residues 1–22; that stretch reads MLYRFWKTGLAIFMPGCILLSS. Cysteine 23 carries N-palmitoyl cysteine lipidation. Cysteine 23 carries S-diacylglycerol cysteine lipidation.

It belongs to the MG067/MG068/MG395 family.

Its subcellular location is the cell membrane. This is an uncharacterized protein from Mycoplasma genitalium (strain ATCC 33530 / DSM 19775 / NCTC 10195 / G37) (Mycoplasmoides genitalium).